A 296-amino-acid chain; its full sequence is Putative mannose 6-phosphate receptor-like protein C530.09c (296 aa).

The first 25 residues, Met-1 to Gly-25, serve as a signal peptide directing secretion. Over Leu-26 to Pro-206 the chain is Lumenal. One can recognise an MRH domain in the interval Pro-42–Thr-197. Cys-44 and Cys-87 form a disulfide bridge. Asn-64, Asn-81, Asn-93, Asn-96, and Asn-143 each carry an N-linked (GlcNAc...) asparagine glycan. 2 cysteine pairs are disulfide-bonded: Cys-147/Cys-183 and Cys-163/Cys-195. A helical transmembrane segment spans residues Val-207–Val-227. Over Tyr-228–Ser-249 the chain is Cytoplasmic. The helical transmembrane segment at Leu-250–Pro-270 threads the bilayer. Residues Ser-271–Thr-296 are Lumenal-facing.

It belongs to the MRL1/IGF2R family.

The protein localises to the golgi apparatus. Its subcellular location is the trans-Golgi network membrane. It is found in the endosome membrane. The sequence is that of Putative mannose 6-phosphate receptor-like protein C530.09c from Schizosaccharomyces pombe (strain 972 / ATCC 24843) (Fission yeast).